Here is a 67-residue protein sequence, read N- to C-terminus: Cold shock protein ScoF (67 aa).

The 61-residue stretch at 4–64 folds into the CSD domain; sequence GTVKWFNSEK…GQKGPQAENI (61 aa).

The protein resides in the cytoplasm. The sequence is that of Cold shock protein ScoF (scoF) from Streptomyces coelicolor (strain ATCC BAA-471 / A3(2) / M145).